A 403-amino-acid polypeptide reads, in one-letter code: Phosphoglycerate kinase (403 aa).

Residues 24–26 (DLN), arginine 39, 62–65 (HLGR), arginine 121, and arginine 161 each bind substrate. ATP is bound by residues lysine 211, glycine 299, glutamate 330, and 359 to 362 (GGDS).

It belongs to the phosphoglycerate kinase family. Monomer.

Its subcellular location is the cytoplasm. The catalysed reaction is (2R)-3-phosphoglycerate + ATP = (2R)-3-phospho-glyceroyl phosphate + ADP. It participates in carbohydrate degradation; glycolysis; pyruvate from D-glyceraldehyde 3-phosphate: step 2/5. The protein is Phosphoglycerate kinase of Rhodococcus erythropolis (strain PR4 / NBRC 100887).